Reading from the N-terminus, the 191-residue chain is Protein 2 in picA locus (191 aa).

This sequence belongs to the acyltransferase 3 family.

The protein localises to the cell membrane. Seems to regulate the surface properties of the bacterium in the presence of plant cells or plant cell extracts. This chain is Protein 2 in picA locus, found in Rhizobium radiobacter (Agrobacterium tumefaciens).